A 152-amino-acid polypeptide reads, in one-letter code: Ribosome maturation factor RimP (152 aa).

The protein belongs to the RimP family.

Its subcellular location is the cytoplasm. In terms of biological role, required for maturation of 30S ribosomal subunits. The sequence is that of Ribosome maturation factor RimP from Escherichia coli (strain K12 / MC4100 / BW2952).